The primary structure comprises 200 residues: MEEKPSKVSLKSSDRQGSDEESVHSDTRDLWTTTTLSQAQLNMPLSEVCEGFDEEGRNISKTRGWHSPGRGSLDEGYKASHKPEELDEHALVELELHRGSSMEINLGEKDTASQIEAEKSSSMSSLNIAKHMPHRAYWAEQQSRLPLPLMELMENEALEILTKALRSYQLGIGRDHFLTKELQRYIEGLKKRRSKRLYVN.

Basic and acidic residues predominate over residues 1-29; sequence MEEKPSKVSLKSSDRQGSDEESVHSDTRD. Disordered regions lie at residues 1–31 and 58–78; these read MEEKPSKVSLKSSDRQGSDEESVHSDTRDLW and NISKTRGWHSPGRGSLDEGYK.

As to quaternary structure, component of the CatSper complex or CatSpermasome composed of the core pore-forming members CATSPER1, CATSPER2, CATSPER3 and CATSPER4 as well as auxiliary members CATSPERB, CATSPERG, CATSPERD, CATSPERE, CATSPERZ, C2CD6/CATSPERT, TMEM249, TMEM262 and EFCAB9. HSPA1 may be an additional auxiliary complex member. The core complex members CATSPER1, CATSPER2, CATSPER3 and CATSPER4 form a heterotetrameric channel. The auxiliary CATSPERB, CATSPERG, CATSPERD and CATSPERE subunits form a pavilion-like structure over the pore which stabilizes the complex through interactions with CATSPER4, CATSPER3, CATSPER1 and CATSPER2 respectively. TMEM262/CATSPERH interacts with CATSPERB, further stabilizing the complex. C2CD6/CATSPERT interacts at least with CATSPERD and is required for targeting the CatSper complex in the flagellar membrane. Interacts with EFCAB9; the interaction is direct, Ca(2+)-dependent and connects EFCAB9 with the CatSper complex. Dissociates from EFCAB9 at elevated pH.

It is found in the cell projection. The protein localises to the cilium. Its subcellular location is the flagellum membrane. Functionally, auxiliary component of the CatSper complex, a complex involved in sperm cell hyperactivation. Sperm cell hyperactivation is needed for sperm motility which is essential late in the preparation of sperm for fertilization. Required for a distribution of the CatSper complex in linear quadrilateral nanodomains along the flagellum, maximizing fertilization inside the mammalian female reproductive tract. Together with EFCAB9, associates with the CatSper channel pore and is required for the two-row structure of each single CatSper channel. This is Cation channel sperm-associated auxiliary subunit zeta from Homo sapiens (Human).